We begin with the raw amino-acid sequence, 158 residues long: MTRAYLGLGSNIGDKAAMLAGAVEHLAATPGIRVVARSADYRTPPWGDTDQDWFLNAAVAIDTELTPHGLLEVCLSIEAALGRVRERRWGPRVIDIDVLAYEGAQVSDERLVLPHRFVRERAFVLVPLAEIAPDLVIGGETVREALAKLDPSGIERVE.

Belongs to the HPPK family.

It catalyses the reaction 6-hydroxymethyl-7,8-dihydropterin + ATP = (7,8-dihydropterin-6-yl)methyl diphosphate + AMP + H(+). Its pathway is cofactor biosynthesis; tetrahydrofolate biosynthesis; 2-amino-4-hydroxy-6-hydroxymethyl-7,8-dihydropteridine diphosphate from 7,8-dihydroneopterin triphosphate: step 4/4. Its function is as follows. Catalyzes the transfer of pyrophosphate from adenosine triphosphate (ATP) to 6-hydroxymethyl-7,8-dihydropterin, an enzymatic step in folate biosynthesis pathway. The protein is 2-amino-4-hydroxy-6-hydroxymethyldihydropteridine pyrophosphokinase (folK) of Methylorubrum extorquens (strain ATCC 14718 / DSM 1338 / JCM 2805 / NCIMB 9133 / AM1) (Methylobacterium extorquens).